A 264-amino-acid polypeptide reads, in one-letter code: ATP synthase subunit a (264 aa).

The next 7 membrane-spanning stretches (helical) occupy residues 41-61 (ITNIGFYLTMGAFFLLIINLL), 99-119 (IYFPFIYALFIFILINNLIGM), 129-149 (HFVLTFALSFTIVLGATILGF), 156-176 (FFSLLVPAGCPLGLLPLLVLI), 194-214 (ANILSGHMLLHILAGFTYNIM), 217-237 (GIIFFFLGLIPLAFIIAFSGL), and 238-258 (ELGIAFIQAQVFVVLTSGYIK).

The protein belongs to the ATPase A chain family. As to quaternary structure, F-type ATPases have 2 components, CF(1) - the catalytic core - and CF(0) - the membrane proton channel. CF(1) has five subunits: alpha(3), beta(3), gamma(1), delta(1), epsilon(1). CF(0) has three main subunits: a, b and c.

The protein resides in the mitochondrion inner membrane. In terms of biological role, mitochondrial membrane ATP synthase (F(1)F(0) ATP synthase or Complex V) produces ATP from ADP in the presence of a proton gradient across the membrane which is generated by electron transport complexes of the respiratory chain. F-type ATPases consist of two structural domains, F(1) - containing the extramembraneous catalytic core and F(0) - containing the membrane proton channel, linked together by a central stalk and a peripheral stalk. During catalysis, ATP synthesis in the catalytic domain of F(1) is coupled via a rotary mechanism of the central stalk subunits to proton translocation. Key component of the proton channel; it may play a direct role in the translocation of protons across the membrane. This Podospora anserina (strain S / ATCC MYA-4624 / DSM 980 / FGSC 10383) (Pleurage anserina) protein is ATP synthase subunit a (ATP6).